Reading from the N-terminus, the 152-residue chain is Probable ribose-5-phosphate isomerase B (152 aa).

12–13 (DH) is a D-ribulose 5-phosphate binding site. Catalysis depends on cysteine 70, which acts as the Proton acceptor. A D-ribulose 5-phosphate-binding site is contributed by 71 to 75 (GTGVG). The active-site Proton donor is histidine 103. The D-ribulose 5-phosphate site is built by aspartate 104, arginine 114, arginine 137, and arginine 141.

This sequence belongs to the LacAB/RpiB family. In terms of assembly, homodimer.

It catalyses the reaction aldehydo-D-ribose 5-phosphate = D-ribulose 5-phosphate. The protein operates within carbohydrate degradation; pentose phosphate pathway; D-ribose 5-phosphate from D-ribulose 5-phosphate (non-oxidative stage): step 1/1. Catalyzes the interconversion of ribulose-5-P and ribose-5-P. This Mycoplasma pneumoniae (strain ATCC 29342 / M129 / Subtype 1) (Mycoplasmoides pneumoniae) protein is Probable ribose-5-phosphate isomerase B.